The primary structure comprises 339 residues: MSSGRGPRIPEYWYGQVPVPPFMRFMEVIYAGAVSLRRLAYRRGWRRRYGVAVPVVVIGNLVAGGTGKTPLTIEIVARLREAGWTPGIASRGYGRRDPKTPRWIQPDTPIELAGDEPAMIAWKTGMRVRVDVDRSAAARALVAEGCDIVVCDDGLQHYRLMRDIEIEVIDGQRRYGNGHLLPAGPLREPMVRGRLCDFRVLNAGQYSDRPTSGFGPGDWQMRLHIDHVQSLQGSRRRSLDAFSGQRVHAVAGIAHPERFFAMLRQRGIGVVPHAFPDHHFYRAEDFTFGSRLPVLMTDKDAVKCRAFADDWFFSVPLRVELPTAFWTALFDRLERLVSC.

62–69 (VAGGTGKT) contacts ATP.

The protein belongs to the LpxK family.

It carries out the reaction a lipid A disaccharide + ATP = a lipid IVA + ADP + H(+). It functions in the pathway glycolipid biosynthesis; lipid IV(A) biosynthesis; lipid IV(A) from (3R)-3-hydroxytetradecanoyl-[acyl-carrier-protein] and UDP-N-acetyl-alpha-D-glucosamine: step 6/6. In terms of biological role, transfers the gamma-phosphate of ATP to the 4'-position of a tetraacyldisaccharide 1-phosphate intermediate (termed DS-1-P) to form tetraacyldisaccharide 1,4'-bis-phosphate (lipid IVA). The polypeptide is Tetraacyldisaccharide 4'-kinase (Xylella fastidiosa (strain 9a5c)).